The chain runs to 544 residues: Dihydrolipoyllysine-residue acetyltransferase component of pyruvate dehydrogenase complex (544 aa).

2 Lipoyl-binding domains span residues 1 to 76 and 113 to 188; these read MYEF…VTID and IYDF…VLIG. Residues K42 and K154 each carry the N6-lipoyllysine modification. Residues 242 to 279 enclose the Peripheral subunit-binding (PSBD) domain; sequence LASPVARKLASDLGVDIATIKGSGEQGRVMKDDVQNSK. Residue H516 is part of the active site.

The protein belongs to the 2-oxoacid dehydrogenase family. In terms of assembly, forms a 24-polypeptide structural core with octahedral symmetry. (R)-lipoate serves as cofactor.

The catalysed reaction is N(6)-[(R)-dihydrolipoyl]-L-lysyl-[protein] + acetyl-CoA = N(6)-[(R)-S(8)-acetyldihydrolipoyl]-L-lysyl-[protein] + CoA. Its function is as follows. The pyruvate dehydrogenase complex catalyzes the overall conversion of pyruvate to acetyl-CoA and CO(2). It contains multiple copies of three enzymatic components: pyruvate dehydrogenase (E1), dihydrolipoamide acetyltransferase (E2) and lipoamide dehydrogenase (E3). The sequence is that of Dihydrolipoyllysine-residue acetyltransferase component of pyruvate dehydrogenase complex (pdhC) from Acholeplasma laidlawii.